We begin with the raw amino-acid sequence, 1227 residues long: JNK-interacting protein 3 (1227 aa).

Positions 1-22 are disordered; sequence MMDNDDALLNNGGPQSGAETVY. Residues 25-113 form the RH1 domain; it reads EDNNMVMSEK…VTQYEREKSA (89 aa). Positions 84 to 191 form a coiled coil; sequence RINQEQDVEV…TELFKNHVDY (108 aa). The tract at residues 281–323 is disordered; sequence DALQQQHHATSPQSPDSSPVVPNVPTNVGRSTTKKEQRSDNNL. The span at 290 to 308 shows a compositional bias: low complexity; the sequence is TSPQSPDSSPVVPNVPTNV. Residues 363–489 adopt a coiled-coil conformation; it reads GKEVENLIME…EAVRLTEILR (127 aa). The region spanning 453–524 is the RH2 domain; sequence RKRFTRVEMA…PSNRPTERVA (72 aa). Disordered stretches follow at residues 517-572, 804-851, and 863-889; these read NRPT…HPAS, GKVE…AEEP, and PLPGAPQRLSTDGNQTNNNNNSSSSSN. The segment covering 526 to 540 has biased composition (gly residues); sequence GLGGGPMFRHTGGGS. Positions 541 to 550 are enriched in low complexity; it reads PAHSHGSPSR. Positions 807 to 817 are enriched in basic and acidic residues; the sequence is EFVRVKPKSDD. A coiled-coil region spans residues 814-849; it reads KSDDEQNSNEKQQQEEEEAKEATEKSNEQLPAVSAE. Residues 879-889 show a composition bias toward low complexity; sequence NNNNNSSSSSN.

It belongs to the JIP scaffold family. In terms of assembly, forms homo- and heterooligomeric complexes. Binds the TPR motif-containing C-terminal of kinesin light chain, Klc. Pre-assembled syd scaffolding complexes are then transported as a cargo of kinesin, to the required subcellular location.

It is found in the cytoplasm. Its function is as follows. The JNK-interacting protein (JIP) group of scaffold proteins selectively mediates JNK-signaling by aggregating specific components of the MAPK cascade to form a functional JNK signaling module. May function as a regulator of vesicle transport, through interactions with the JNK-signaling components and motor proteins. Syd is required for efficient kinesin-I mediated axonal transport. The protein is JNK-interacting protein 3 (syd) of Drosophila melanogaster (Fruit fly).